Consider the following 120-residue polypeptide: Large ribosomal subunit protein bL19c (120 aa).

Belongs to the bacterial ribosomal protein bL19 family.

It localises to the plastid. The protein resides in the chloroplast. In Thalassiosira weissflogii (Marine diatom), this protein is Large ribosomal subunit protein bL19c.